Here is a 474-residue protein sequence, read N- to C-terminus: ATP synthase subunit beta (474 aa).

153–160 (GGAGVGKT) is a binding site for ATP.

It belongs to the ATPase alpha/beta chains family. F-type ATPases have 2 components, CF(1) - the catalytic core - and CF(0) - the membrane proton channel. CF(1) has five subunits: alpha(3), beta(3), gamma(1), delta(1), epsilon(1). CF(0) has three main subunits: a(1), b(2) and c(9-12). The alpha and beta chains form an alternating ring which encloses part of the gamma chain. CF(1) is attached to CF(0) by a central stalk formed by the gamma and epsilon chains, while a peripheral stalk is formed by the delta and b chains.

It localises to the cell inner membrane. The catalysed reaction is ATP + H2O + 4 H(+)(in) = ADP + phosphate + 5 H(+)(out). Its function is as follows. Produces ATP from ADP in the presence of a proton gradient across the membrane. The catalytic sites are hosted primarily by the beta subunits. This Rickettsia typhi (strain ATCC VR-144 / Wilmington) protein is ATP synthase subunit beta.